The primary structure comprises 396 residues: MRECRSQEASGQLTFAKTPRTVGIEEEFHLVDLTTRRLATRAPELLPLLPDGYVAELQSCVVETNGSVVSTLPELRADLTARRRVLVDTAATLGLGVVAAGAVPLSVPSEMRVTQTSRYQQMLADYQLLAREQLICGTQIHVGIDDPDESVLVAGRVAAYVPTLLALSASSPFWSDGSDTGYSSVRTLVWQRWPTTGLAPPATSAAEYDALISDLIATGVITDAGMSYFDVRPALRTPTLELRVCDSCPRADTIVLIAALFRALVEREIEGLRAGVPAAIVVPPLGRAALWRAARSGLEGDLVDLIHPASRPAGDVVTDLVQMLRPQLEASRDWQTVEELARRALAEGSSAARQRRAMRMRNSLLDVVDHLIAETADVATVANDALPTQRNGSDRG.

This sequence belongs to the glutamate--cysteine ligase type 2 family. YbdK subfamily.

It carries out the reaction L-cysteine + L-glutamate + ATP = gamma-L-glutamyl-L-cysteine + ADP + phosphate + H(+). Functionally, ATP-dependent carboxylate-amine ligase which exhibits weak glutamate--cysteine ligase activity. This Mycolicibacterium smegmatis (strain ATCC 700084 / mc(2)155) (Mycobacterium smegmatis) protein is Putative glutamate--cysteine ligase 2-2.